Consider the following 147-residue polypeptide: Large ribosomal subunit protein uL22c (147 aa).

The protein belongs to the universal ribosomal protein uL22 family. As to quaternary structure, part of the 50S ribosomal subunit.

It localises to the plastid. Functionally, this protein binds specifically to 23S rRNA. Its function is as follows. The globular domain of the protein is located near the polypeptide exit tunnel on the outside of the subunit, while an extended beta-hairpin is found that lines the wall of the exit tunnel in the center of the 70S ribosome. The polypeptide is Large ribosomal subunit protein uL22c (rpl22) (Cuscuta obtusiflora (Peruvian dodder)).